The following is a 164-amino-acid chain: Protein SprT (164 aa).

The SprT-like domain maps to 13–156 (YQQAEAFFKR…LCRRCREPLV (144 aa)). H69 contributes to the Zn(2+) binding site. E70 is an active-site residue. Residue H73 coordinates Zn(2+).

This sequence belongs to the SprT family. Zn(2+) is required as a cofactor.

Its subcellular location is the cytoplasm. This chain is Protein SprT, found in Pseudomonas syringae pv. syringae (strain B728a).